The primary structure comprises 191 residues: Molybdenum cofactor guanylyltransferase (191 aa).

GTP contacts are provided by residues 11–13 (LCG), lysine 23, aspartate 66, and aspartate 97. Aspartate 97 is a Mg(2+) binding site.

Belongs to the MobA family. In terms of assembly, monomer. The cofactor is Mg(2+).

The protein localises to the cytoplasm. It carries out the reaction Mo-molybdopterin + GTP + H(+) = Mo-molybdopterin guanine dinucleotide + diphosphate. Transfers a GMP moiety from GTP to Mo-molybdopterin (Mo-MPT) cofactor (Moco or molybdenum cofactor) to form Mo-molybdopterin guanine dinucleotide (Mo-MGD) cofactor. This Campylobacter jejuni subsp. jejuni serotype O:6 (strain 81116 / NCTC 11828) protein is Molybdenum cofactor guanylyltransferase.